The sequence spans 245 residues: tRNA1(Val) (adenine(37)-N6)-methyltransferase (245 aa).

This sequence belongs to the methyltransferase superfamily. tRNA (adenine-N(6)-)-methyltransferase family.

It is found in the cytoplasm. The enzyme catalyses adenosine(37) in tRNA1(Val) + S-adenosyl-L-methionine = N(6)-methyladenosine(37) in tRNA1(Val) + S-adenosyl-L-homocysteine + H(+). Specifically methylates the adenine in position 37 of tRNA(1)(Val) (anticodon cmo5UAC). This Salmonella paratyphi A (strain ATCC 9150 / SARB42) protein is tRNA1(Val) (adenine(37)-N6)-methyltransferase.